The primary structure comprises 136 residues: Large ribosomal subunit protein uL16 (136 aa).

This sequence belongs to the universal ribosomal protein uL16 family. In terms of assembly, part of the 50S ribosomal subunit.

Binds 23S rRNA and is also seen to make contacts with the A and possibly P site tRNAs. This chain is Large ribosomal subunit protein uL16, found in Shewanella loihica (strain ATCC BAA-1088 / PV-4).